The sequence spans 398 residues: MNIPSIENCDLHNKAVLLRVDFNVPIKDGEIRDVTRILRALPTIQYLVNASAKIIIISHFGRPKARDNNLSLKNVIDTLSQLLNKKVKFIDDCVGEKVQKAVSAMDAGDIILLENLRFYEGEKENDANFARQLASLADIYVNDAFSCSHRAHASISRITEFLPSYAGFCLQDELKYLEKAVSFKAKPITAIVGGAKISTKIKVLMKLTEKVDYLVLGGAIANNFLSFSKVNIGKSFFQNGVDDLLHNIVETANKNNCKIVVPEDVLVAVNSDYSTSISRKTESILDGDIILDIGSQTLSTISSIIASSKTLLWNGPIGVFEHSAFASGTIGVMKIVSDLTHKGKLTSIIGGGDSLSAISAAGLTDKDFTYVSTGGGAFLDWLSGDEMPGVAALQKRLD.

Residues Asp-21–Asn-23, Arg-36, His-59–Arg-62, Arg-117, and Arg-150 contribute to the substrate site. ATP contacts are provided by residues Lys-200, Glu-321, and Gly-351–Ser-354.

It belongs to the phosphoglycerate kinase family. As to quaternary structure, monomer.

It localises to the cytoplasm. It catalyses the reaction (2R)-3-phosphoglycerate + ATP = (2R)-3-phospho-glyceroyl phosphate + ADP. Its pathway is carbohydrate degradation; glycolysis; pyruvate from D-glyceraldehyde 3-phosphate: step 2/5. The sequence is that of Phosphoglycerate kinase from Wolbachia sp. subsp. Drosophila simulans (strain wRi).